We begin with the raw amino-acid sequence, 427 residues long: Adenylosuccinate synthetase (427 aa).

Residues 12–18 and 40–42 each bind GTP; these read GDEGKGK and GHT. Asp13 serves as the catalytic Proton acceptor. Asp13 and Gly40 together coordinate Mg(2+). Residues 13 to 16, 38 to 41, Thr128, Arg142, Gln223, Thr238, and Arg302 each bind IMP; these read DEGK and NAGH. The active-site Proton donor is His41. 298–304 contacts substrate; it reads TTTGRPR. Residues Arg304, 330–332, and 412–414 each bind GTP; these read SID and SVG.

Belongs to the adenylosuccinate synthetase family. Homodimer. Mg(2+) serves as cofactor.

The protein localises to the cytoplasm. It catalyses the reaction IMP + L-aspartate + GTP = N(6)-(1,2-dicarboxyethyl)-AMP + GDP + phosphate + 2 H(+). The protein operates within purine metabolism; AMP biosynthesis via de novo pathway; AMP from IMP: step 1/2. Plays an important role in the de novo pathway of purine nucleotide biosynthesis. Catalyzes the first committed step in the biosynthesis of AMP from IMP. The chain is Adenylosuccinate synthetase from Staphylococcus aureus (strain N315).